A 62-amino-acid polypeptide reads, in one-letter code: UPF0434 protein Rleg2_3773 (62 aa).

The protein belongs to the UPF0434 family.

This is UPF0434 protein Rleg2_3773 from Rhizobium leguminosarum bv. trifolii (strain WSM2304).